We begin with the raw amino-acid sequence, 220 residues long: Iron-sulfur cluster repair protein YtfE (220 aa).

Belongs to the RIC family. YtfE subfamily. Homodimer.

It is found in the cytoplasm. Functionally, di-iron-containing protein involved in the repair of iron-sulfur clusters damaged by oxidative and nitrosative stress conditions. The chain is Iron-sulfur cluster repair protein YtfE from Salmonella schwarzengrund (strain CVM19633).